The chain runs to 83 residues: Cell division topological specificity factor (83 aa).

The protein belongs to the MinE family.

Prevents the cell division inhibition by proteins MinC and MinD at internal division sites while permitting inhibition at polar sites. This ensures cell division at the proper site by restricting the formation of a division septum at the midpoint of the long axis of the cell. This Pseudoalteromonas atlantica (strain T6c / ATCC BAA-1087) protein is Cell division topological specificity factor.